The primary structure comprises 767 residues: Transferrin receptor protein 1 (767 aa).

The Cytoplasmic portion of the chain corresponds to 1–67 (MDQARSAFSN…LTKPKRFNGS (67 aa)). 2 positions are modified to phosphoserine: Ser9 and Ser18. Tyr19 is subject to Phosphotyrosine. Positions 19 to 22 (YTRF) match the Endocytosis signal motif. A Phosphothreonine modification is found at Thr20. Phosphoserine is present on Ser23. The short motif at 60–63 (KPKR) is the Stop-transfer sequence element. The chain crosses the membrane as a helical; Signal-anchor for type II membrane protein span at residues 68 to 88 (FCYAVIAVIIFFLIGFMIGYL). The S-palmitoyl cysteine moiety is linked to residue Cys69. Topologically, residues 89–767 (GYCKRVEPKS…GDIWDIDNEF (679 aa)) are extracellular. Positions 96–110 (PKSECGRSGDSKEIE) are enriched in basic and acidic residues. The disordered stretch occupies residues 96 to 122 (PKSECGRSGDSKEIEGTEPPETEEYFP). Residues 111–121 (GTEPPETEEYF) are compositionally biased toward acidic residues. 3 N-linked (GlcNAc...) asparagine glycosylation sites follow: Asn211, Asn258, and Asn324. Residues 230-320 (SKATTVTGKL…GTGDPYTPGF (91 aa)) enclose the PA domain. The segment at 576–767 (TMDTYEVLSQ…GDIWDIDNEF (192 aa)) is ligand-binding. The Cell attachment site signature appears at 653–655 (RGD). N-linked (GlcNAc...) asparagine glycosylation is present at Asn734.

It belongs to the peptidase M28 family. M28B subfamily. In terms of assembly, homodimer; disulfide-linked. Binds one transferrin or HFE molecule per subunit. Interacts with SH3BP4. Interacts with STEAP3; facilitates TFRC endocytosis in erythroid precursor cells. Stearoylated by ZDHHC6 which inhibits TFRC-mediated activation of the JNK pathway and promotes mitochondrial fragmentation. Stearoylation does not affect iron uptake.

Its subcellular location is the cell membrane. The protein localises to the melanosome. In terms of biological role, cellular uptake of iron occurs via receptor-mediated endocytosis of ligand-occupied transferrin receptor into specialized endosomes. Endosomal acidification leads to iron release. The apotransferrin-receptor complex is then recycled to the cell surface with a return to neutral pH and the concomitant loss of affinity of apotransferrin for its receptor. Transferrin receptor is necessary for development of erythrocytes and the nervous system. Positively regulates T and B cell proliferation through iron uptake. Acts as a lipid sensor that regulates mitochondrial fusion by regulating activation of the JNK pathway. When dietary levels of stearate (C18:0) are low, promotes activation of the JNK pathway, resulting in HUWE1-mediated ubiquitination and subsequent degradation of the mitofusin MFN2 and inhibition of mitochondrial fusion. When dietary levels of stearate (C18:0) are high, TFRC stearoylation inhibits activation of the JNK pathway and thus degradation of the mitofusin MFN2. Mediates uptake of NICOL1 into fibroblasts where it may regulate extracellular matrix production. This is Transferrin receptor protein 1 (TFRC) from Equus caballus (Horse).